The sequence spans 208 residues: Large ribosomal subunit protein uL4 (208 aa).

The tract at residues 45-77 (RQGTHKAKERAEIKGSTRKIKKQKGTGTARAGS) is disordered.

It belongs to the universal ribosomal protein uL4 family. Part of the 50S ribosomal subunit.

In terms of biological role, one of the primary rRNA binding proteins, this protein initially binds near the 5'-end of the 23S rRNA. It is important during the early stages of 50S assembly. It makes multiple contacts with different domains of the 23S rRNA in the assembled 50S subunit and ribosome. Its function is as follows. Forms part of the polypeptide exit tunnel. The sequence is that of Large ribosomal subunit protein uL4 from Christiangramia forsetii (strain DSM 17595 / CGMCC 1.15422 / KT0803) (Gramella forsetii).